The primary structure comprises 214 residues: UPF0056 membrane protein aq_540 (214 aa).

6 helical membrane-spanning segments follow: residues Phe17–Met37, Val47–Gly67, Phe73–Ala93, Leu122–Leu142, Val153–Ser173, and Ile185–Val205.

Belongs to the UPF0056 (MarC) family.

Its subcellular location is the cell membrane. This is UPF0056 membrane protein aq_540 from Aquifex aeolicus (strain VF5).